The following is a 306-amino-acid chain: Replication termination factor 2 (306 aa).

The interval 192 to 306 (RAKLEKKTKK…HWVTHTSYCF (115 aa)) is disordered. Basic and acidic residues predominate over residues 226–240 (GKSEEADPDPREKKS). S287 bears the Phosphoserine mark.

It belongs to the rtf2 family. In terms of assembly, interacts with DDI2; probably also interacts with DDI1. Undergoes proteasomal degradation, via DDI1 and DDI2. Removal from stalled replisomes and degradation are required for genome stability.

Its subcellular location is the chromosome. Its function is as follows. Replication termination factor which is a component of the elongating replisome. Required for ATR pathway signaling upon DNA damage and has a positive activity during DNA replication. Might function to facilitate fork pausing at replication fork barriers like the rDNA. May be globally required to stimulate ATR signaling after the fork stalls or encounters a lesion. Interacts with nascent DNA. This chain is Replication termination factor 2, found in Rattus norvegicus (Rat).